A 694-amino-acid chain; its full sequence is GRB2-associated-binding protein 1 (694 aa).

Serine 2 carries the N-acetylserine modification. Residues glutamate 5–glycine 116 form the PH domain. 2 disordered regions span residues glutamate 122–leucine 164 and proline 194–glycine 231. The segment covering alanine 145 to threonine 157 has biased composition (polar residues). Residues proline 194–serine 203 show a composition bias toward basic and acidic residues. Positions alanine 204 to glycine 231 are enriched in polar residues. Phosphoserine is present on residues serine 251, serine 253, serine 266, and serine 304. Residues phenylalanine 323 to asparagine 386 form a disordered region. The segment covering isoleucine 362–asparagine 386 has biased composition (polar residues). Threonine 387 bears the Phosphothreonine mark. A phosphoserine mark is found at serine 402 and serine 454. 2 disordered regions span residues alanine 493–alanine 532 and glutamate 544–arginine 656. Residue alanine 547 is modified to Phosphoserine. A compositionally biased stretch (polar residues) spans proline 594–glycine 611. Tyrosine 627 carries the post-translational modification Phosphotyrosine. Threonine 638 bears the Phosphothreonine mark. Serine 651 carries the phosphoserine modification. Residue tyrosine 659 is modified to Phosphotyrosine. A disordered region spans residues lysine 671–lysine 694. Residues serine 672 to threonine 684 show a composition bias toward basic and acidic residues. Serine 683 carries the post-translational modification Phosphoserine. Over residues glutamate 685–lysine 694 the composition is skewed to polar residues.

It belongs to the GAB family. As to quaternary structure, identified in a complex containing FRS2, GRB2, GAB1, PIK3R1 and SOS1. Forms a tripartite complex containing GAB1, METTL13 and SPRY2. Within the complex interacts with METTL13. Interacts with GRB2 and with other SH2-containing proteins. Interacts with phosphorylated LAT2. Interacts with PTPRJ. Interacts (phosphorylated) with PTPN11. Interacts with HCK. Phosphorylated in response to FGFR1 activation. Phosphorylated on tyrosine residue(s) by the epidermal growth factor receptor (EGFR) and the insulin receptor (INSR). Tyrosine phosphorylation of GAB1 mediates interaction with several proteins that contain SH2 domains. Phosphorylated on tyrosine residues by HCK upon IL6 signaling.

Adapter protein that plays a role in intracellular signaling cascades triggered by activated receptor-type kinases. Plays a role in FGFR1 signaling. Probably involved in signaling by the epidermal growth factor receptor (EGFR) and the insulin receptor (INSR). Involved in the MET/HGF-signaling pathway. The chain is GRB2-associated-binding protein 1 (GAB1) from Homo sapiens (Human).